The chain runs to 214 residues: Orotate phosphoribosyltransferase (214 aa).

5-phospho-alpha-D-ribose 1-diphosphate-binding positions include Arg-125, Lys-126, Lys-129, His-131, and 151–159 (EDTSTTGNS). 2 residues coordinate orotate: Thr-155 and Arg-183.

It belongs to the purine/pyrimidine phosphoribosyltransferase family. PyrE subfamily. In terms of assembly, homodimer. Mg(2+) serves as cofactor.

It carries out the reaction orotidine 5'-phosphate + diphosphate = orotate + 5-phospho-alpha-D-ribose 1-diphosphate. It participates in pyrimidine metabolism; UMP biosynthesis via de novo pathway; UMP from orotate: step 1/2. Catalyzes the transfer of a ribosyl phosphate group from 5-phosphoribose 1-diphosphate to orotate, leading to the formation of orotidine monophosphate (OMP). In Tropheryma whipplei (strain TW08/27) (Whipple's bacillus), this protein is Orotate phosphoribosyltransferase.